A 673-amino-acid chain; its full sequence is UvrABC system protein B (673 aa).

The Helicase ATP-binding domain occupies 26-183 (ANFEAGLAKQ…RHLTDLQYTR (158 aa)). 39 to 46 (GVTGSGKT) contacts ATP. A Beta-hairpin motif is present at residues 92–115 (YYDYYQPEAYVPSSDTFIEKDSSI). The region spanning 431-597 (QVDDLMSEIH…SVERPISDIM (167 aa)) is the Helicase C-terminal domain. Residues 601–631 (REDAAEKKSGKGRSKSRQVAEETPDYRAMKP) form a disordered region. The segment covering 618–630 (QVAEETPDYRAMK) has biased composition (basic and acidic residues). Residues 635-670 (AGKLKSLEQKMYQHAKDLEFEAAAQIRDQIQKLKTA) form the UVR domain.

This sequence belongs to the UvrB family. Forms a heterotetramer with UvrA during the search for lesions. Interacts with UvrC in an incision complex.

The protein resides in the cytoplasm. The UvrABC repair system catalyzes the recognition and processing of DNA lesions. A damage recognition complex composed of 2 UvrA and 2 UvrB subunits scans DNA for abnormalities. Upon binding of the UvrA(2)B(2) complex to a putative damaged site, the DNA wraps around one UvrB monomer. DNA wrap is dependent on ATP binding by UvrB and probably causes local melting of the DNA helix, facilitating insertion of UvrB beta-hairpin between the DNA strands. Then UvrB probes one DNA strand for the presence of a lesion. If a lesion is found the UvrA subunits dissociate and the UvrB-DNA preincision complex is formed. This complex is subsequently bound by UvrC and the second UvrB is released. If no lesion is found, the DNA wraps around the other UvrB subunit that will check the other stand for damage. The protein is UvrABC system protein B of Xanthomonas oryzae pv. oryzae (strain PXO99A).